The following is a 201-amino-acid chain: ATP synthase subunit delta, chloroplastic (201 aa).

Belongs to the ATPase delta chain family. As to quaternary structure, F-type ATPases have 2 components, F(1) - the catalytic core - and F(0) - the membrane proton channel. F(1) has five subunits: alpha(3), beta(3), gamma(1), delta(1), epsilon(1). CF(0) has four main subunits: a(1), b(1), b'(1) and c(10-14). The alpha and beta chains form an alternating ring which encloses part of the gamma chain. F(1) is attached to F(0) by a central stalk formed by the gamma and epsilon chains, while a peripheral stalk is formed by the delta, b and b' chains.

It localises to the plastid. The protein resides in the chloroplast thylakoid membrane. Functionally, f(1)F(0) ATP synthase produces ATP from ADP in the presence of a proton or sodium gradient. F-type ATPases consist of two structural domains, F(1) containing the extramembraneous catalytic core and F(0) containing the membrane proton channel, linked together by a central stalk and a peripheral stalk. During catalysis, ATP synthesis in the catalytic domain of F(1) is coupled via a rotary mechanism of the central stalk subunits to proton translocation. This protein is part of the stalk that links CF(0) to CF(1). It either transmits conformational changes from CF(0) to CF(1) or is implicated in proton conduction. This is ATP synthase subunit delta, chloroplastic from Vaucheria litorea (Yellow-green alga).